The sequence spans 312 residues: Ribosomal protein L11 methyltransferase (312 aa).

S-adenosyl-L-methionine contacts are provided by Thr-160, Gly-181, Asp-203, and Asn-248.

This sequence belongs to the methyltransferase superfamily. PrmA family.

It is found in the cytoplasm. The enzyme catalyses L-lysyl-[protein] + 3 S-adenosyl-L-methionine = N(6),N(6),N(6)-trimethyl-L-lysyl-[protein] + 3 S-adenosyl-L-homocysteine + 3 H(+). In terms of biological role, methylates ribosomal protein L11. This Fusobacterium nucleatum subsp. nucleatum (strain ATCC 25586 / DSM 15643 / BCRC 10681 / CIP 101130 / JCM 8532 / KCTC 2640 / LMG 13131 / VPI 4355) protein is Ribosomal protein L11 methyltransferase.